We begin with the raw amino-acid sequence, 554 residues long: 3-(3-hydroxy-phenyl)propionate/3-hydroxycinnamic acid hydroxylase (554 aa).

FAD-binding positions include 17–46 and 285–295; these read QVAIAGAGPVGLMMANYLGQMGIDVLVVEK and FRIDRVLLAGD.

The protein belongs to the PheA/TfdB FAD monooxygenase family. FAD serves as cofactor.

It carries out the reaction 3-(3-hydroxyphenyl)propanoate + NADH + O2 + H(+) = 3-(2,3-dihydroxyphenyl)propanoate + NAD(+) + H2O. The enzyme catalyses (2E)-3-(3-hydroxyphenyl)prop-2-enoate + NADH + O2 + H(+) = (2E)-3-(2,3-dihydroxyphenyl)prop-2-enoate + NAD(+) + H2O. It functions in the pathway aromatic compound metabolism; 3-phenylpropanoate degradation. Functionally, catalyzes the insertion of one atom of molecular oxygen into position 2 of the phenyl ring of 3-(3-hydroxyphenyl)propionate (3-HPP) and hydroxycinnamic acid (3HCI). The protein is 3-(3-hydroxy-phenyl)propionate/3-hydroxycinnamic acid hydroxylase of Escherichia coli O157:H7.